The primary structure comprises 159 residues: uncharacterized protein (159 aa).

Positions 6–66 (LSKKDWEIIK…YLRFDKLGYT (61 aa)) constitute an HTH asnC-type domain. Residues 25–44 (DAEIGRRIGLSKSAVRWRRI) constitute a DNA-binding region (H-T-H motif).

This is an uncharacterized protein from Pyrococcus horikoshii (strain ATCC 700860 / DSM 12428 / JCM 9974 / NBRC 100139 / OT-3).